The primary structure comprises 104 residues: Protein EPIDERMAL PATTERNING FACTOR 1 (104 aa).

Residues Met-1–Ala-20 form the signal peptide. Intrachain disulfides connect Cys-60–Cys-94, Cys-64–Cys-70, Cys-67–Cys-96, and Cys-79–Cys-88. Asn-98 carries N-linked (GlcNAc...) asparagine glycosylation.

It belongs to the plant cysteine rich small secretory peptide family. Epidermal patterning factor subfamily. Interacts with ERECTA and ERL1, but not with TMM. As to expression, expressed in shoots, but not in roots. Mostly localized in developing leaves, specifically in meristemoids, guard mother cells (GMCs), and young guard cells.

Its subcellular location is the secreted. Functionally, controls stomatal patterning. Regulates asymmetric cell division during guard cell differentiation. Mediates stomatal development inhibition. Not cleaved by the protease CRSP (AC Q9LNU1). MEPF1: mobile signal controlling stomatal development in a non-cell-autonomous manner. Uses ERL1 as major receptor. May act by competing with somatogen (AC Q9SV72) for the same receptor, TMM (AC Q9SSD1). The polypeptide is Protein EPIDERMAL PATTERNING FACTOR 1 (Arabidopsis thaliana (Mouse-ear cress)).